A 222-amino-acid chain; its full sequence is Probable pyridoxal 5'-phosphate synthase subunit SNO2 (222 aa).

58–60 (GES) lines the L-glutamine pocket. Catalysis depends on Cys-91, which acts as the Nucleophile. L-glutamine-binding positions include Arg-120 and 151–152 (IR). Residues His-197 and Glu-199 each act as charge relay system in the active site.

This sequence belongs to the glutaminase PdxT/SNO family.

The enzyme catalyses aldehydo-D-ribose 5-phosphate + D-glyceraldehyde 3-phosphate + L-glutamine = pyridoxal 5'-phosphate + L-glutamate + phosphate + 3 H2O + H(+). It carries out the reaction L-glutamine + H2O = L-glutamate + NH4(+). Its pathway is cofactor biosynthesis; pyridoxal 5'-phosphate biosynthesis. Functionally, catalyzes the hydrolysis of glutamine to glutamate and ammonia as part of the biosynthesis of pyridoxal 5'-phosphate. The resulting ammonia molecule is channeled to the active site of a SNZ isoform. This chain is Probable pyridoxal 5'-phosphate synthase subunit SNO2 (SNO2), found in Saccharomyces cerevisiae (strain ATCC 204508 / S288c) (Baker's yeast).